The sequence spans 104 residues: Protein ORF3 (104 aa).

Positions 1–35 (MVTIPPLVSRWFPVCGFRVCKISSPFAFTTPRWPH) match the Nuclear export signal motif. A disordered region spans residues 78 to 104 (PALQQGTHSSRQVTPLSLRSRSSTFNK).

As to quaternary structure, interacts with host RGS16.

It localises to the host cytoplasm. Its subcellular location is the host nucleus. Its function is as follows. Plays a role in modulating host cell signaling by binding to and degrading host RGS16. Not necessary for virus replication. The protein is Protein ORF3 of Sus scrofa (Pig).